Reading from the N-terminus, the 397-residue chain is Plasma membrane iron permease (397 aa).

A run of 4 helical transmembrane segments spans residues 61–81 (FTAL…FYAL), 92–112 (IWEG…GFAM), 177–197 (AFPL…YFIY), and 292–312 (GSIL…FLMW). Phosphoserine is present on residues Ser-337 and Ser-338. Residues 337–346 (SSHTPVQSSS) show a composition bias toward polar residues. A disordered region spans residues 337–364 (SSHTPVQSSSSEDEFKINSPTDDKGDKA). Thr-340 bears the Phosphothreonine mark. Phosphoserine occurs at positions 346, 347, and 355. Over residues 349-364 (DEFKINSPTDDKGDKA) the composition is skewed to basic and acidic residues. Thr-357 bears the Phosphothreonine mark. A phosphoserine mark is found at Ser-374, Ser-375, and Ser-376.

The protein belongs to the oxidase-dependent Fe transporter (OFeT) (TC 9.A.10.1) family.

It localises to the membrane. In terms of biological role, permease for high affinity iron uptake. This chain is Plasma membrane iron permease (fip1), found in Schizosaccharomyces pombe (strain 972 / ATCC 24843) (Fission yeast).